The chain runs to 960 residues: MAEADPGLPTQAIWDIPFESLEFNEKIGKGSFGSVFRGCYLGLDVAIKKIEKADDPEYLKYIDREVSMLQSLRHPFIVNFSGICVHSSGLYIVTEFVSGGDVRQLLKKTPPIGWDKRVSIAVDLAKAMVFLHAKKIIHRDLKSKNILLDEFQRIRLCDFGFARMSEQTKKSRHMTMCGTEGWVAPEILLGMSYDTSCDVFSYGVVLAELITGRKPGVDLWVRSPETCFDINPEELKQKSIPGCPSELISVCVECCLYEPLTRPKFDEILSQLKVCQNNLKVATAAAAAAAAAAAAAAAVVSTPTIQTPIIQTPNISFSPNNSNNNNNNNNNISNISPDITTGIQQINLSSSGGSNNSSPSTPPQGSQLVSLAQSRRNTMSLHRKSMELNLVDGQLSTTPPPTSPIQSRPHKPSDSIWKIAAKPKHVGYQTLKRKQGPCYAALTSHITKMIERATSDYYYDTSYIQDFLLAYRCFAPPQQIFELLLSRYIANSPDNFTNDINGWKKVQRVIQLRVIIFFKRWIDYYPQDFLEEAMEDNLNEFDKISAQQNSSTALLLGTTISNNELLIDPKLMTELQKKRSELELLIQINSPSDFINNNNNNNNNPVNNINNINNNNSVNSSSSNNNNNNNNNNSNNNNNNNNNNNNNNNNNNGLNIINIAAANQSKMMLQNGNNRYSVLVTSNGIGNGEEPYPVSIIPPPTTSEYLDVKDIHSTELARQITIINSFYFNRIKAREFIEYIWEKCGEESTTTPYVGTSFVEVVPAENIHKFVRKCNNLARFVSTEILKQTKLQKRVATIERFIEAAEKCLANNDYAAVFSIVEPLVDQSIERLSDTWRNVSQRNLATFEHLKSIVSKENDHKKYRELLPDAKPPCIPNIHLLLDELSFIETSSPRLLPGGIVNFFHYRQLSRKILQSQQLQSHCFRPIPSIQKVLTKPPSELFDDELIKNNSLKCEPPVSL.

Positions 21-274 (LEFNEKIGKG…FDEILSQLKV (254 aa)) constitute a Protein kinase domain. ATP is bound by residues 27 to 35 (IGKGSFGSV) and K48. The active-site Proton acceptor is the D140. Low complexity predominate over residues 314-368 (NISFSPNNSNNNNNNNNNISNISPDITTGIQQINLSSSGGSNNSSPSTPPQGSQL). 2 disordered regions span residues 314–372 (NISF…VSLA) and 393–413 (GQLS…HKPS). Positions 437–565 (PCYAALTSHI…LGTTISNNEL (129 aa)) constitute an N-terminal Ras-GEF domain. A disordered region spans residues 596–651 (NNNNNNNNNPVNNINNINNNNSVNSSSSNNNNNNNNNNSNNNNNNNNNNNNNNNNN). The 246-residue stretch at 712-957 (HSTELARQIT…KNNSLKCEPP (246 aa)) folds into the Ras-GEF domain.

It belongs to the protein kinase superfamily. TKL Ser/Thr protein kinase family.

It carries out the reaction L-seryl-[protein] + ATP = O-phospho-L-seryl-[protein] + ADP + H(+). The enzyme catalyses L-threonyl-[protein] + ATP = O-phospho-L-threonyl-[protein] + ADP + H(+). In terms of biological role, promotes the exchange of Ras-bound GDP by GTP. The polypeptide is RasGEF domain-containing serine/threonine-protein kinase X (gefX) (Dictyostelium discoideum (Social amoeba)).